The primary structure comprises 533 residues: Probable RNA-binding protein 46 (533 aa).

3 RRM domains span residues 61–139 (CEVF…VSLD), 141–223 (CRLF…WADP), and 236–308 (KVLY…LAKP).

Interacts with YTHDC2, MEIOC, MOV10, CNOT6L, DDX4, UPF1 and PABPC1.

It is found in the cytoplasm. Its function is as follows. Essential for male and female fertility, playing a crucial role in regulating germ cell development by ensuring the proper progression of meiosis prophase I. Regulates mitotic-to-meiotic transition in spermatogenesis by forming a complex with MEIOC and YTHDC2 which recognizes and down-regulates mitotic transcripts for a successful meiotic entry. Required for normal synaptonemal complex formation during meiosis, binding meiotic cohesin subunit mRNAs containing GCCUAU/GUUCGA motifs in their 3'UTRs regions and positively regulating their translation. Required for spermatogonial differentiation in both developing and adult testis. The protein is Probable RNA-binding protein 46 (RBM46) of Homo sapiens (Human).